A 292-amino-acid chain; its full sequence is Ribosomal RNA small subunit methyltransferase A (292 aa).

S-adenosyl-L-methionine contacts are provided by N29, L31, G56, E77, D102, and N127.

Belongs to the class I-like SAM-binding methyltransferase superfamily. rRNA adenine N(6)-methyltransferase family. RsmA subfamily.

Its subcellular location is the cytoplasm. The catalysed reaction is adenosine(1518)/adenosine(1519) in 16S rRNA + 4 S-adenosyl-L-methionine = N(6)-dimethyladenosine(1518)/N(6)-dimethyladenosine(1519) in 16S rRNA + 4 S-adenosyl-L-homocysteine + 4 H(+). Its function is as follows. Specifically dimethylates two adjacent adenosines (A1518 and A1519) in the loop of a conserved hairpin near the 3'-end of 16S rRNA in the 30S particle. May play a critical role in biogenesis of 30S subunits. The protein is Ribosomal RNA small subunit methyltransferase A of Bacillus pumilus (strain SAFR-032).